A 477-amino-acid polypeptide reads, in one-letter code: tRNA-2-methylthio-N(6)-dimethylallyladenosine synthase (477 aa).

Positions 3–120 (KKLHIKTWGC…LPTMIKQVQE (118 aa)) constitute an MTTase N-terminal domain. Residues C12, C49, C83, C157, C161, and C164 each contribute to the [4Fe-4S] cluster site. The 233-residue stretch at 143–375 (RAEGATAFVS…QHVINNQSMQ (233 aa)) folds into the Radical SAM core domain. The TRAM domain maps to 378–441 (RAMLGSTQRI…PNSLRGKFLR (64 aa)).

Belongs to the methylthiotransferase family. MiaB subfamily. As to quaternary structure, monomer. [4Fe-4S] cluster serves as cofactor.

The protein resides in the cytoplasm. It catalyses the reaction N(6)-dimethylallyladenosine(37) in tRNA + (sulfur carrier)-SH + AH2 + 2 S-adenosyl-L-methionine = 2-methylsulfanyl-N(6)-dimethylallyladenosine(37) in tRNA + (sulfur carrier)-H + 5'-deoxyadenosine + L-methionine + A + S-adenosyl-L-homocysteine + 2 H(+). Catalyzes the methylthiolation of N6-(dimethylallyl)adenosine (i(6)A), leading to the formation of 2-methylthio-N6-(dimethylallyl)adenosine (ms(2)i(6)A) at position 37 in tRNAs that read codons beginning with uridine. The protein is tRNA-2-methylthio-N(6)-dimethylallyladenosine synthase of Aeromonas hydrophila subsp. hydrophila (strain ATCC 7966 / DSM 30187 / BCRC 13018 / CCUG 14551 / JCM 1027 / KCTC 2358 / NCIMB 9240 / NCTC 8049).